Here is a 130-residue protein sequence, read N- to C-terminus: Small ribosomal subunit protein uS9 (130 aa).

Residues 109–130 form a disordered region; that stretch reads RMKERRKYGLKKARKAPQFSKR. Over residues 111–130 the composition is skewed to basic residues; sequence KERRKYGLKKARKAPQFSKR.

The protein belongs to the universal ribosomal protein uS9 family.

The chain is Small ribosomal subunit protein uS9 from Caldanaerobacter subterraneus subsp. tengcongensis (strain DSM 15242 / JCM 11007 / NBRC 100824 / MB4) (Thermoanaerobacter tengcongensis).